The chain runs to 316 residues: Ribosomal RNA small subunit methyltransferase H (316 aa).

S-adenosyl-L-methionine is bound by residues 35–37, Asp55, Phe84, Asp105, and Gln112; that span reads AGH.

This sequence belongs to the methyltransferase superfamily. RsmH family.

It is found in the cytoplasm. The enzyme catalyses cytidine(1402) in 16S rRNA + S-adenosyl-L-methionine = N(4)-methylcytidine(1402) in 16S rRNA + S-adenosyl-L-homocysteine + H(+). In terms of biological role, specifically methylates the N4 position of cytidine in position 1402 (C1402) of 16S rRNA. This chain is Ribosomal RNA small subunit methyltransferase H, found in Streptococcus pneumoniae (strain JJA).